Reading from the N-terminus, the 145-residue chain is 3-dehydroquinate dehydratase (145 aa).

Tyr22 functions as the Proton acceptor in the catalytic mechanism. The substrate site is built by Asn71, His77, and Asp84. The active-site Proton donor is His97. Residues Leu98–Ser99 and Arg108 each bind substrate.

Belongs to the type-II 3-dehydroquinase family. In terms of assembly, homododecamer.

The enzyme catalyses 3-dehydroquinate = 3-dehydroshikimate + H2O. The protein operates within metabolic intermediate biosynthesis; chorismate biosynthesis; chorismate from D-erythrose 4-phosphate and phosphoenolpyruvate: step 3/7. Catalyzes a trans-dehydration via an enolate intermediate. This is 3-dehydroquinate dehydratase from Francisella tularensis subsp. tularensis (strain WY96-3418).